The sequence spans 378 residues: Filamin-binding LIM protein 1 (378 aa).

The segment at 1–69 is filamin-binding; the sequence is MASKPEKRVA…RSWMPPGRAA (69 aa). The disordered stretch occupies residues 38-179; sequence WPGRPWESAP…PPPEEPVSFP (142 aa). A compositionally biased stretch (pro residues) spans 103–115; it reads LPPPPPPPAADLP. LIM zinc-binding domains follow at residues 186-247, 248-305, and 306-375; these read DICA…TLEK, CGKC…RKFA, and PVCS…RSAA. The tract at residues 281–378 is PLEKHC1-binding; sequence IGDESFALDS…HVKRSAAGCC (98 aa).

In terms of assembly, interacts with PLEKHC1, FLNA, FLNB and FLNC. Interacts with NKX2-5.

The protein localises to the cell junction. Its subcellular location is the focal adhesion. The protein resides in the cytoplasm. It is found in the cytoskeleton. It localises to the stress fiber. Serves as an anchoring site for cell-ECM adhesion proteins and filamin-containing actin filaments. Is implicated in cell shape modulation (spreading) and motility. May participate in the regulation of filamin-mediated cross-linking and stabilization of actin filaments. May also regulate the assembly of filamin-containing signaling complexes that control actin assembly. Promotes dissociation of FLNA from ITGB3 and ITGB7. Promotes activation of integrins and regulates integrin-mediated cell-cell adhesion. The chain is Filamin-binding LIM protein 1 (FBLIM1) from Bos taurus (Bovine).